A 364-amino-acid chain; its full sequence is Caveolae-associated protein 4 (364 aa).

Residues 1 to 24 (MEHNGSASNADKIHQNRLSSVTED) form a disordered region. Residues 44-77 (VDSVQASQKRIEERHREMENAIKSVQIDLLKLSQ) are a coiled coil. Residues Ser172 and Ser173 each carry the phosphoserine modification. A coiled-coil region spans residues 202–226 (FSKENMQKTRQNLDKKVNRIRTRIV). Residues 231–256 (RERLRQSGERLRQSGERLRQSGERFK) are compositionally biased toward basic and acidic residues. Disordered stretches follow at residues 231–283 (RERL…RTVA) and 311–339 (SDEL…TPEP). Tyr326 is modified (phosphotyrosine). Thr336 is subject to Phosphothreonine. Ser355 is modified (phosphoserine).

It belongs to the CAVIN family. As to quaternary structure, component of the CAVIN complex composed of CAVIN1, CAVIN2, CAVIN3 and CAVIN4. Interacts with CAVIN1, ADRA1A and ADRA1B. Interacts with CAVIN2; this augments the transactivation of NPPA. Interacts with CAV3. Interacts with MAPK1 and MAPK3.

It is found in the cytoplasm. The protein localises to the myofibril. It localises to the sarcomere. Its subcellular location is the cytosol. The protein resides in the cell membrane. It is found in the sarcolemma. The protein localises to the membrane. It localises to the caveola. Modulates the morphology of formed caveolae in cardiomyocytes, but is not required for caveolar formation. Facilitates the recruitment of MAPK1/3 to caveolae within cardiomyocytes and regulates alpha-1 adrenergic receptor-induced hypertrophic responses in cardiomyocytes through MAPK1/3 activation. Contributes to proper membrane localization and stabilization of caveolin-3 (CAV3) in cardiomyocytes. Induces RHOA activation and activates NPPA transcription and myofibrillar organization through the Rho/ROCK signaling pathway. The protein is Caveolae-associated protein 4 of Homo sapiens (Human).